We begin with the raw amino-acid sequence, 204 residues long: High frequency lysogenization protein HflD homolog (204 aa).

It belongs to the HflD family.

It is found in the cytoplasm. The protein resides in the cell inner membrane. In Aeromonas hydrophila subsp. hydrophila (strain ATCC 7966 / DSM 30187 / BCRC 13018 / CCUG 14551 / JCM 1027 / KCTC 2358 / NCIMB 9240 / NCTC 8049), this protein is High frequency lysogenization protein HflD homolog.